Consider the following 571-residue polypeptide: uncharacterized protein (571 aa).

Helical transmembrane passes span 10–29 (VRLH…HFIG), 36–55 (VSLG…GLLF), 65–87 (WAFF…FASL), 96–118 (ALAV…LFRF), and 166–188 (ATTY…PRLL). Residues 294–378 (TEVDDQELLS…IATAARNLGF (85 aa)) enclose the RCK C-terminal domain. The next 6 membrane-spanning stretches (helical) occupy residues 388–406 (LVYL…LLQV), 411–433 (VPLG…WLYS), 446–465 (LRLL…GLAA), 480–502 (LFAK…GLLL), 509–531 (LPPI…LNAL), and 546–568 (VPFA…CAVA).

Belongs to the AAE transporter (TC 2.A.81) family.

The protein resides in the cell membrane. This is an uncharacterized protein from Bordetella bronchiseptica (strain ATCC BAA-588 / NCTC 13252 / RB50) (Alcaligenes bronchisepticus).